The following is a 490-amino-acid chain: MERKNVESLFAHARDINALVIGDLMLDEYLWGRAERISPEAPVQVLDVTREEVRIGGAGNVANNLVALGCRVSVASVVGGDENGTILLHAFSGKGVDVSGVFEDPQRTTSRKTRVVAANQQIVRIDRESRDPIGAGYEEKIVGFLREQGSRFNVILISDYLKGVLTPTLLAAVIAVARERKIPVVVDPKGNDYTKYRGATLLTPNRKEAEAASGIAIRDEASLCRAGERLLATADLTALVITRSEEGMSLFLRDGGVVHIPTFAREVFDVTGAGDTVLAILGLALACGVGFADAAGLANVAAGIAVGKVGTSTVSPAEVIGSMGFQHSDSDAKIKNLDGLAGIIEAEKARGKKIVFTNGCFDLLHVGHVKYLQKAKSYGDVLVLGLNSDASVRRLKGEKRPLIDEAERAHILAALDCIDYVVIFDEDTPLRLIETLKPAVLVKGGDYTPEGVVGKDVVESYGGRVELVTFVDGRSTTNIIDKILRAYGEE.

Residues 1–330 (MERKNVESLF…GSMGFQHSDS (330 aa)) are ribokinase. 205 to 208 (NRKE) contributes to the ATP binding site. The active site involves D275. Residues 356–490 (FTNGCFDLLH…DKILRAYGEE (135 aa)) form a cytidylyltransferase region.

It in the N-terminal section; belongs to the carbohydrate kinase PfkB family. This sequence in the C-terminal section; belongs to the cytidylyltransferase family. In terms of assembly, homodimer.

The catalysed reaction is D-glycero-beta-D-manno-heptose 7-phosphate + ATP = D-glycero-beta-D-manno-heptose 1,7-bisphosphate + ADP + H(+). The enzyme catalyses D-glycero-beta-D-manno-heptose 1-phosphate + ATP + H(+) = ADP-D-glycero-beta-D-manno-heptose + diphosphate. Its pathway is nucleotide-sugar biosynthesis; ADP-L-glycero-beta-D-manno-heptose biosynthesis; ADP-L-glycero-beta-D-manno-heptose from D-glycero-beta-D-manno-heptose 7-phosphate: step 1/4. The protein operates within nucleotide-sugar biosynthesis; ADP-L-glycero-beta-D-manno-heptose biosynthesis; ADP-L-glycero-beta-D-manno-heptose from D-glycero-beta-D-manno-heptose 7-phosphate: step 3/4. Its function is as follows. Catalyzes the phosphorylation of D-glycero-D-manno-heptose 7-phosphate at the C-1 position to selectively form D-glycero-beta-D-manno-heptose-1,7-bisphosphate. Functionally, catalyzes the ADP transfer from ATP to D-glycero-beta-D-manno-heptose 1-phosphate, yielding ADP-D-glycero-beta-D-manno-heptose. The sequence is that of Bifunctional protein HldE from Geobacter metallireducens (strain ATCC 53774 / DSM 7210 / GS-15).